The chain runs to 154 residues: Superoxide dismutase [Cu-Zn] (154 aa).

Cu cation is bound by residues histidine 47, histidine 49, and histidine 64. A disulfide bridge links cysteine 58 with cysteine 147. Zn(2+) contacts are provided by histidine 64, histidine 72, histidine 81, and aspartate 84. Histidine 121 is a binding site for Cu cation. The interval 122 to 143 is disordered; it reads GGTDDLGKGGNEESLKTGNAGP. The span at 123–136 shows a compositional bias: basic and acidic residues; sequence GTDDLGKGGNEESL. Substrate is bound at residue arginine 144.

Belongs to the Cu-Zn superoxide dismutase family. As to quaternary structure, homodimer. It depends on Cu cation as a cofactor. The cofactor is Zn(2+).

Its subcellular location is the cytoplasm. It carries out the reaction 2 superoxide + 2 H(+) = H2O2 + O2. In terms of biological role, destroys radicals which are normally produced within the cells and which are toxic to biological systems. The chain is Superoxide dismutase [Cu-Zn] (SOD1) from Cordyceps militaris (Caterpillar fungus).